Here is a 289-residue protein sequence, read N- to C-terminus: Elongation factor Ts (289 aa).

The involved in Mg(2+) ion dislocation from EF-Tu stretch occupies residues 80–83 (TDFV).

The protein belongs to the EF-Ts family.

It localises to the cytoplasm. Functionally, associates with the EF-Tu.GDP complex and induces the exchange of GDP to GTP. It remains bound to the aminoacyl-tRNA.EF-Tu.GTP complex up to the GTP hydrolysis stage on the ribosome. This is Elongation factor Ts from Francisella tularensis subsp. tularensis (strain FSC 198).